Consider the following 80-residue polypeptide: Progonadoliberin-1 (80 aa).

Positions 1–21 (MGIKRALWWMVVCVVVLQVSA) are cleaved as a signal peptide. Pyrrolidone carboxylic acid is present on Gln-22. At Gly-31 the chain carries Glycine amide.

This sequence belongs to the GnRH family.

It localises to the secreted. In terms of biological role, stimulates the secretion of gonadotropins. This is Progonadoliberin-1 (gnrh1) from Clarias gariepinus (North African catfish).